A 186-amino-acid polypeptide reads, in one-letter code: Glycerol-3-phosphate acyltransferase 1 (186 aa).

5 helical membrane passes run 9–29 (MQFL…AYIV), 58–78 (GYFV…VSIA), 85–105 (STFV…PVLF), 121–141 (IAFD…FYLI), and 161–181 (ILYS…VLIL).

This sequence belongs to the PlsY family. Probably interacts with PlsX.

It localises to the cell membrane. The enzyme catalyses an acyl phosphate + sn-glycerol 3-phosphate = a 1-acyl-sn-glycero-3-phosphate + phosphate. It participates in lipid metabolism; phospholipid metabolism. Catalyzes the transfer of an acyl group from acyl-phosphate (acyl-PO(4)) to glycerol-3-phosphate (G3P) to form lysophosphatidic acid (LPA). This enzyme utilizes acyl-phosphate as fatty acyl donor, but not acyl-CoA or acyl-ACP. The protein is Glycerol-3-phosphate acyltransferase 1 of Bacillus cereus (strain ZK / E33L).